The primary structure comprises 191 residues: Xanthine phosphoribosyltransferase (191 aa).

Residues leucine 20 and asparagine 27 each contribute to the xanthine site. Residue 128–132 (ANGQA) participates in 5-phospho-alpha-D-ribose 1-diphosphate binding. A xanthine-binding site is contributed by lysine 156.

It belongs to the purine/pyrimidine phosphoribosyltransferase family. Xpt subfamily. Homodimer.

Its subcellular location is the cytoplasm. The enzyme catalyses XMP + diphosphate = xanthine + 5-phospho-alpha-D-ribose 1-diphosphate. The protein operates within purine metabolism; XMP biosynthesis via salvage pathway; XMP from xanthine: step 1/1. Its function is as follows. Converts the preformed base xanthine, a product of nucleic acid breakdown, to xanthosine 5'-monophosphate (XMP), so it can be reused for RNA or DNA synthesis. This chain is Xanthine phosphoribosyltransferase, found in Limosilactobacillus reuteri (strain DSM 20016) (Lactobacillus reuteri).